The primary structure comprises 280 residues: Ribosomal RNA small subunit methyltransferase I (280 aa).

It belongs to the methyltransferase superfamily. RsmI family.

Its subcellular location is the cytoplasm. It catalyses the reaction cytidine(1402) in 16S rRNA + S-adenosyl-L-methionine = 2'-O-methylcytidine(1402) in 16S rRNA + S-adenosyl-L-homocysteine + H(+). In terms of biological role, catalyzes the 2'-O-methylation of the ribose of cytidine 1402 (C1402) in 16S rRNA. In Rickettsia prowazekii (strain Madrid E), this protein is Ribosomal RNA small subunit methyltransferase I.